We begin with the raw amino-acid sequence, 329 residues long: Ribose-phosphate pyrophosphokinase B (329 aa).

Positions 131, 133, and 146 each coordinate Mg(2+). Residues 227 to 242 (TGKIAIIIDDIADTCK) form a binding of phosphoribosylpyrophosphate region.

This sequence belongs to the ribose-phosphate pyrophosphokinase family. Mg(2+) is required as a cofactor.

It localises to the cytoplasm. The catalysed reaction is D-ribose 5-phosphate + ATP = 5-phospho-alpha-D-ribose 1-diphosphate + AMP + H(+). It functions in the pathway metabolic intermediate biosynthesis; 5-phospho-alpha-D-ribose 1-diphosphate biosynthesis; 5-phospho-alpha-D-ribose 1-diphosphate from D-ribose 5-phosphate (route I): step 1/1. In Dictyostelium discoideum (Social amoeba), this protein is Ribose-phosphate pyrophosphokinase B (prsB).